Here is a 123-residue protein sequence, read N- to C-terminus: Venom peptide MmKTx1 (123 aa).

Positions 1 to 21 are cleaved as a signal peptide; that stretch reads MSIKISAIALFMLSFTVFVNG.

Belongs to the scorpion La1-like peptide family. Contains 4 disulfide bonds. In terms of tissue distribution, expressed by the venom gland.

Its subcellular location is the secreted. This is Venom peptide MmKTx1 from Olivierus martensii (Manchurian scorpion).